The following is a 484-amino-acid chain: Solute carrier family 40 member 1 (484 aa).

A run of 11 helical transmembrane segments spans residues 58–78, 94–114, 123–143, 189–209, 212–232, 279–299, 308–328, 346–366, 377–397, 413–433, and 442–462; these read LLTA…GPIV, WLLL…ALLV, GFPA…LAAL, VLSG…ALAA, LAAV…FPAL, VVLP…FGTL, GIPA…GIAA, LWSI…VWAG, LMGG…AVMQ, GVQN…GIIV, and LIVL…MHVY.

The protein belongs to the ferroportin (FP) (TC 2.A.100) family. SLC40A subfamily.

It is found in the membrane. May be involved in iron transport and iron homeostasis. This chain is Solute carrier family 40 member 1, found in Oryza sativa subsp. japonica (Rice).